Here is a 784-residue protein sequence, read N- to C-terminus: Homoaconitase, mitochondrial (784 aa).

A mitochondrion-targeting transit peptide spans 1-32 (MIHPVRRALAVAASRAPRQFLAAASRTTSVRS). [4Fe-4S] cluster contacts are provided by Cys399, Cys468, and Cys471. A disordered region spans residues 572-596 (EAGLTPESTSSSSSSSSSSEEESLT). The span at 578–589 (ESTSSSSSSSSS) shows a compositional bias: low complexity.

This sequence belongs to the aconitase/IPM isomerase family. [4Fe-4S] cluster serves as cofactor.

It localises to the mitochondrion. The catalysed reaction is (2R,3S)-homoisocitrate = cis-homoaconitate + H2O. It functions in the pathway amino-acid biosynthesis; L-lysine biosynthesis via AAA pathway; L-alpha-aminoadipate from 2-oxoglutarate: step 3/5. In terms of biological role, catalyzes the reversible hydration of cis-homoaconitate to (2R,3S)-homoisocitrate, a step in the alpha-aminoadipate pathway for lysine biosynthesis. In Neurospora crassa (strain ATCC 24698 / 74-OR23-1A / CBS 708.71 / DSM 1257 / FGSC 987), this protein is Homoaconitase, mitochondrial (lys-4).